A 123-amino-acid polypeptide reads, in one-letter code: Protein Wnt-3b (123 aa).

Ser1 carries O-palmitoleoyl serine; by PORCN lipidation. A disulfide bridge connects residues Cys89 and Cys104. N-linked (GlcNAc...) asparagine glycosylation is present at Asn90.

The protein belongs to the Wnt family. Palmitoleoylation is required for efficient binding to frizzled receptors. Depalmitoleoylation leads to Wnt signaling pathway inhibition.

Its subcellular location is the secreted. The protein localises to the extracellular space. The protein resides in the extracellular matrix. In terms of biological role, ligand for members of the frizzled family of seven transmembrane receptors. Probable developmental protein. May be a signaling molecule which affects the development of discrete regions of tissues. Is likely to signal over only few cell diameters. In Alopias vulpinus (Common thresher shark), this protein is Protein Wnt-3b (WNT-3B).